We begin with the raw amino-acid sequence, 1499 residues long: Collagen alpha-2(V) chain (1499 aa).

Positions 1–26 (MMANWAEARPLLILIVLLGQFVSIKA) are cleaved as a signal peptide. One can recognise a VWFC domain in the interval 39-97 (IACTQNGQMYLNRDIWKPAPCQICVCDNGAILCDKIECQDVLDCADPVTPPGECCPVCS). A disordered region spans residues 104–1268 (NTNFGRGRKG…DDKNKTDPGV (1165 aa)). The segment covering 170–182 (PGAPGPPGHPSHP) has biased composition (pro residues). The segment covering 212-227 (PGSVGPVGPRGPQGLQ) has biased composition (low complexity). Over residues 236–248 (TGPPGEPGDPGPM) the composition is skewed to pro residues. Hydroxyproline is present on residues Pro290, Pro293, and Pro296. 2 stretches are compositionally biased toward low complexity: residues 322 to 340 (EAGPTGPMGAMGPLGPRGM) and 427 to 443 (TPGAKGPTGSPGTSGPP). The short motif at 506–508 (RGD) is the Cell attachment site element. Low complexity-rich tracts occupy residues 604–626 (SIGIRGQPGSMGLPGPKGSSGDP) and 694–709 (DQGVPGDPGAVGPLGP). Hydroxyproline is present on residues Pro611 and Pro617. The segment covering 710 to 721 (RGERGNPGERGE) has biased composition (basic and acidic residues). The segment covering 732–741 (GMAGGHGPDG) has biased composition (gly residues). Residues 742 to 758 (PKGSPGPSGTPGDTGPP) are compositionally biased toward low complexity. A compositionally biased stretch (basic and acidic residues) spans 776 to 787 (KGDRGGIGEKGA). The span at 826–841 (PPGSRGNPGSRGENGP) shows a compositional bias: low complexity. Gly residues predominate over residues 894–903 (GLKGGRGTQG). Pro919 bears the 3-hydroxyproline; partial mark. Over residues 919–929 (PPGPAGAPGPA) the composition is skewed to pro residues. Short sequence motifs (cell attachment site) lie at residues 944-946 (RGD), 1067-1069 (RGD), 1070-1072 (RGD), 1100-1102 (RGD), 1127-1129 (RGD), and 1136-1138 (RGD). The span at 1063–1072 (AVGERGDRGD) shows a compositional bias: basic and acidic residues. A compositionally biased stretch (low complexity) spans 1093–1114 (APGDAGQRGDPGSRGPIGPPGR). Over residues 1127 to 1141 (RGDKGDHGDRGDRGQ) the composition is skewed to basic and acidic residues. Pro1156 is subject to 3-hydroxyproline; partial. Pro residues-rich tracts occupy residues 1171-1181 (PFGPRGPPGPV) and 1211-1226 (EGPPGEPGPPGPPGPP). Positions 1230–1499 (TAALGDIMGH…GVEIGPVCFV (270 aa)) are cleaved as a propeptide — C-terminal propeptide. Asn1262 is a glycosylation site (N-linked (GlcNAc...) asparagine). The 234-residue stretch at 1266–1499 (PGVHATLKSL…GVEIGPVCFV (234 aa)) folds into the Fibrillar collagen NC1 domain. 3 disulfide bridges follow: Cys1296–Cys1328, Cys1336–Cys1497, and Cys1405–Cys1450. The Ca(2+) site is built by Asp1314, Asn1316, Gln1317, and Asp1322. N-linked (GlcNAc...) asparagine glycosylation occurs at Asn1400.

Belongs to the fibrillar collagen family. Trimers of two alpha 1(V) and one alpha 2(V) chains in most tissues and trimers of one alpha 1(V), one alpha 2(V), and one alpha 3(V) chains in placenta. Prolines at the third position of the tripeptide repeating unit (G-X-P) are hydroxylated in some or all of the chains. Probably 3-hydroxylated on Pro-919 and Pro-1156 by LEPREL1.

It is found in the secreted. It localises to the extracellular space. The protein resides in the extracellular matrix. Functionally, type V collagen is a member of group I collagen (fibrillar forming collagen). It is a minor connective tissue component of nearly ubiquitous distribution. Type V collagen binds to DNA, heparan sulfate, thrombospondin, heparin, and insulin. Type V collagen is a key determinant in the assembly of tissue-specific matrices. This is Collagen alpha-2(V) chain (COL5A2) from Homo sapiens (Human).